The sequence spans 118 residues: Small ribosomal subunit protein uS19c (118 aa).

Residues 92-118 (KKSSKKVTKNKKSIKKNIKTTSKKFKK) form a disordered region.

This sequence belongs to the universal ribosomal protein uS19 family.

The protein localises to the plastid. Its function is as follows. Protein S19 forms a complex with S13 that binds strongly to the 16S ribosomal RNA. The polypeptide is Small ribosomal subunit protein uS19c (rps19) (Euglena longa (Euglenophycean alga)).